Consider the following 740-residue polypeptide: Alpha-1,6-mannosylglycoprotein 6-beta-N-acetylglucosaminyltransferase A (740 aa).

Residues 1-13 lie on the Cytoplasmic side of the membrane; sequence MAFFSPWKLSSQK. Residues 14–30 form a helical; Signal-anchor for type II membrane protein membrane-spanning segment; the sequence is LGFFLVTFGFIWGMMLL. Over 31-740 the chain is Lumenal; sequence HFTIQQRTQP…GQVALCKDCL (710 aa). N-linked (GlcNAc...) asparagine glycans are attached at residues Asn-109, Asn-114, and Asn-117. Disulfide bonds link Cys-144/Cys-182, Cys-155/Cys-195, Cys-171/Cys-337, Cys-371/Cys-625, Cys-648/Cys-723, Cys-652/Cys-725, Cys-659/Cys-712, Cys-680/Cys-701, and Cys-736/Cys-739. A sufficient for catalytic activity region spans residues 212 to 740; it reads NSLAEIRTDF…GQVALCKDCL (529 aa). A glycan (N-linked (GlcNAc...) asparagine) is linked at Asn-333. 377-378 is a binding site for substrate; that stretch reads DS. 2 N-linked (GlcNAc...) asparagine glycosylation sites follow: Asn-432 and Asn-446. Glu-525 serves as a coordination point for UDP-N-acetyl-alpha-D-glucosamine. Lys-553 lines the substrate pocket.

Belongs to the glycosyltransferase 18 family. N-glycosylated. In terms of processing, a secreted form is released from the membrane after cleavage by gamma-secretase. As to expression, detected in kidney (at protein level). Detected in kidney.

It is found in the golgi apparatus membrane. The protein localises to the secreted. It catalyses the reaction N(4)-{beta-D-GlcNAc-(1-&gt;2)-[beta-D-GlcNAc-(1-&gt;4)]-alpha-D-Man-(1-&gt;3)-[beta-D-GlcNAc-(1-&gt;2)-alpha-D-Man-(1-&gt;6)]-beta-D-Man-(1-&gt;4)-beta-D-GlcNAc-(1-&gt;4)-beta-D-GlcNAc}-L-asparaginyl-[protein] + UDP-N-acetyl-alpha-D-glucosamine = N(4)-{beta-D-GlcNAc-(1-&gt;2)-[beta-D-GlcNAc-(1-&gt;4)]-alpha-D-Man-(1-&gt;3)-[beta-D-GlcNAc-(1-&gt;2)-[beta-D-GlcNAc-(1-&gt;6)]-alpha-D-Man-(1-&gt;6)]-beta-D-Man-(1-&gt;4)-beta-D-GlcNAc-(1-&gt;4)-beta-D-GlcNAc}-L-asparaginyl-[protein] + UDP + H(+). It functions in the pathway protein modification; protein glycosylation. In terms of biological role, catalyzes the addition of N-acetylglucosamine (GlcNAc) in beta 1-6 linkage to the alpha-linked mannose of biantennary N-linked oligosaccharides. Catalyzes an important step in the biosynthesis of branched, complex-type N-glycans, such as those found on EGFR, TGFR (TGF-beta receptor) and CDH2. Via its role in the biosynthesis of complex N-glycans, plays an important role in the activation of cellular signaling pathways, reorganization of the actin cytoskeleton, cell-cell adhesion and cell migration. MGAT5-dependent EGFR N-glycosylation enhances the interaction between EGFR and LGALS3 and thereby prevents rapid EGFR endocytosis and prolongs EGFR signaling. Required for efficient interaction between TGFB1 and its receptor. Enhances activation of intracellular signaling pathways by several types of growth factors, including FGF2, PDGF, IGF, TGFB1 and EGF. MGAT5-dependent CDH2 N-glycosylation inhibits CDH2-mediated homotypic cell-cell adhesion and contributes to the regulation of downstream signaling pathways. Promotes cell migration. Contributes to the regulation of the inflammatory response. MGAT5-dependent TCR N-glycosylation enhances the interaction between TCR and LGALS3, limits agonist-induced TCR clustering, and thereby dampens TCR-mediated responses to antigens. Required for normal leukocyte evasation and accumulation at sites of inflammation. Inhibits attachment of monocytes to the vascular endothelium and subsequent monocyte diapedesis. Its function is as follows. Promotes proliferation of umbilical vein endothelial cells and angiogenesis, at least in part by promoting the release of the growth factor FGF2 from the extracellular matrix. This is Alpha-1,6-mannosylglycoprotein 6-beta-N-acetylglucosaminyltransferase A (Mgat5) from Rattus norvegicus (Rat).